The sequence spans 183 residues: Holliday junction branch migration complex subunit RuvA (183 aa).

Positions 1 to 63 (MIVGLIGVVE…EDAHLLYGFL (63 aa)) are domain I. The domain II stretch occupies residues 64-141 (EEGEKILFER…IQDETKPMHN (78 aa)). Residue Asn-141 is a region of interest, flexible linker. Residues 141-183 (NEVFLALESLGFKSAEINKVLKTLKPSLSIEAAIKEALQQLRS) are domain III.

The protein belongs to the RuvA family. In terms of assembly, homotetramer. Forms an RuvA(8)-RuvB(12)-Holliday junction (HJ) complex. HJ DNA is sandwiched between 2 RuvA tetramers; dsDNA enters through RuvA and exits via RuvB. An RuvB hexamer assembles on each DNA strand where it exits the tetramer. Each RuvB hexamer is contacted by two RuvA subunits (via domain III) on 2 adjacent RuvB subunits; this complex drives branch migration. In the full resolvosome a probable DNA-RuvA(4)-RuvB(12)-RuvC(2) complex forms which resolves the HJ.

The protein resides in the cytoplasm. In terms of biological role, the RuvA-RuvB-RuvC complex processes Holliday junction (HJ) DNA during genetic recombination and DNA repair, while the RuvA-RuvB complex plays an important role in the rescue of blocked DNA replication forks via replication fork reversal (RFR). RuvA specifically binds to HJ cruciform DNA, conferring on it an open structure. The RuvB hexamer acts as an ATP-dependent pump, pulling dsDNA into and through the RuvAB complex. HJ branch migration allows RuvC to scan DNA until it finds its consensus sequence, where it cleaves and resolves the cruciform DNA. The polypeptide is Holliday junction branch migration complex subunit RuvA (Helicobacter pylori (strain G27)).